Consider the following 42-residue polypeptide: Photosystem I reaction center subunit IX (42 aa).

The helical transmembrane segment at 7–27 threads the bilayer; sequence YLSTAPVLAAVWFTVLAGILI.

Belongs to the PsaJ family.

The protein localises to the plastid. It localises to the chloroplast thylakoid membrane. Its function is as follows. May help in the organization of the PsaE and PsaF subunits. This is Photosystem I reaction center subunit IX from Ostreococcus tauri.